The sequence spans 610 residues: Elongation factor 4 (610 aa).

Positions Asn14–Lys196 constitute a tr-type G domain. GTP contacts are provided by residues Asp26 to Thr31 and Asn143 to Asp146.

This sequence belongs to the TRAFAC class translation factor GTPase superfamily. Classic translation factor GTPase family. LepA subfamily.

It is found in the cell inner membrane. It catalyses the reaction GTP + H2O = GDP + phosphate + H(+). Required for accurate and efficient protein synthesis under certain stress conditions. May act as a fidelity factor of the translation reaction, by catalyzing a one-codon backward translocation of tRNAs on improperly translocated ribosomes. Back-translocation proceeds from a post-translocation (POST) complex to a pre-translocation (PRE) complex, thus giving elongation factor G a second chance to translocate the tRNAs correctly. Binds to ribosomes in a GTP-dependent manner. The protein is Elongation factor 4 of Legionella pneumophila (strain Lens).